The sequence spans 207 residues: Outer-membrane lipoprotein LolB (207 aa).

The N-terminal stretch at 1-21 is a signal peptide; it reads MPLPDFRLIRLLPLAALVLTA. Cys-22 carries the N-palmitoyl cysteine lipid modification. A lipid anchor (S-diacylglycerol cysteine) is attached at Cys-22.

Belongs to the LolB family. In terms of assembly, monomer.

The protein resides in the cell outer membrane. Plays a critical role in the incorporation of lipoproteins in the outer membrane after they are released by the LolA protein. This is Outer-membrane lipoprotein LolB from Escherichia coli O7:K1 (strain IAI39 / ExPEC).